We begin with the raw amino-acid sequence, 281 residues long: uncharacterized protein (281 aa).

This is an uncharacterized protein from Mycoplasma genitalium (strain ATCC 33530 / DSM 19775 / NCTC 10195 / G37) (Mycoplasmoides genitalium).